A 312-amino-acid polypeptide reads, in one-letter code: Phospholipid phosphatase 3 (312 aa).

Topologically, residues 1–33 are cytoplasmic; the sequence is MQSYKYDKAIVPESKNGGSPALNNNPRKGGSKR. S19 is modified (phosphoserine). Residues 34-54 traverse the membrane as a helical segment; it reads VLLICLDLFCLFMAALPFLII. Residues 55–85 are Extracellular-facing; the sequence is ETSTIKPYRRGFYCNDESIKYPLKVSETIND. Residues 86–106 form a helical membrane-spanning segment; it reads AVLCAVGIVIAILRIITGEFY. The Cytoplasmic segment spans residues 107-123; it reads RIYYLKEKSRSTIQNPY. Residues 109 to 110 carry the Dityrosine basolateral targeting motif motif; the sequence is YY. A helical transmembrane segment spans residues 124 to 144; sequence VAALYKQVGCFLFGCAISQSF. Topologically, residues 145–194 are extracellular; the sequence is TDIAKVSIGRLRPHFLSVCDPDFSQINCSEGYIQNYRCRGEDSKVQEARK. The phosphatase sequence motif I stretch occupies residues 149–157; the sequence is KVSIGRLRP. N171 carries N-linked (GlcNAc...) asparagine glycosylation. An Integrin-binding motif motif is present at residues 183-185; it reads RGE. Residues 195–215 form a helical membrane-spanning segment; it reads SFFSGHASFSMFTMLYLVLYL. The phosphatase sequence motif II stretch occupies residues 197-200; sequence FSGH. H200 (proton donors) is an active-site residue. Over 216-226 the chain is Cytoplasmic; the sequence is QARFTWRGARL. Residues 227–244 form a helical membrane-spanning segment; sequence LRPLLQFTLLMMAFYTGL. The tract at residues 245–256 is phosphatase sequence motif III; the sequence is SRVSDYKHHPSD. Residues 245–258 lie on the Extracellular side of the membrane; sequence SRVSDYKHHPSDVL. The Nucleophile role is filled by H252. The helical transmembrane segment at 259 to 279 threads the bilayer; the sequence is AGFAQGALVACCIVFFVSDLF. The segment at 276-312 is mediates interaction with CTNND1; that stretch reads SDLFKTKTTLSLPAPAIRREILSPVDIMDRSNHHNMV. At 280-312 the chain is on the cytoplasmic side; the sequence is KTKTTLSLPAPAIRREILSPVDIMDRSNHHNMV.

Belongs to the PA-phosphatase related phosphoesterase family. Forms functional homodimers and homooligomers that are not required for substrate recognition and catalytic activity. Can also form heterooligomers with other PLPP2 and PLPP3. Interacts with CTNND1; negatively regulates the PLPP3-mediated stabilization of beta-catenin/CTNNB1. N-glycosylated. Contains high-mannose oligosaccharides. In terms of tissue distribution, detected in epithelial cells of intestinal mucosa, lung, liver and brain.

The protein resides in the cell membrane. The protein localises to the basolateral cell membrane. Its subcellular location is the endoplasmic reticulum membrane. It localises to the endoplasmic reticulum-Golgi intermediate compartment membrane. It is found in the golgi apparatus membrane. The protein resides in the golgi apparatus. The protein localises to the trans-Golgi network membrane. Its subcellular location is the membrane raft. It catalyses the reaction a 1,2-diacyl-sn-glycero-3-phosphate + H2O = a 1,2-diacyl-sn-glycerol + phosphate. The catalysed reaction is 1,2-dihexadecanoyl-sn-glycero-3-phosphate + H2O = 1,2-dihexadecanoyl-sn-glycerol + phosphate. It carries out the reaction 1,2-di-(9Z-octadecenoyl)-sn-glycero-3-phosphate + H2O = 1,2-di-(9Z-octadecenoyl)-sn-glycerol + phosphate. The enzyme catalyses a monoacyl-sn-glycero-3-phosphate + H2O = a monoacylglycerol + phosphate. It catalyses the reaction (9Z)-octadecenoyl-sn-glycero-3-phosphate + H2O = (9Z-octadecenoyl)-glycerol + phosphate. The catalysed reaction is sphing-4-enine 1-phosphate + H2O = sphing-4-enine + phosphate. It carries out the reaction an N-acylsphing-4-enine 1-phosphate + H2O = an N-acylsphing-4-enine + phosphate. The enzyme catalyses N-(octanoyl)-sphing-4-enine-1-phosphate + H2O = N-octanoylsphing-4-enine + phosphate. It catalyses the reaction N-(9Z-octadecenoyl)-ethanolamine phosphate + H2O = N-(9Z-octadecenoyl) ethanolamine + phosphate. The protein operates within lipid metabolism; phospholipid metabolism. Magnesium-independent phospholipid phosphatase. Insensitive to N-ethylmaleimide. Inhibited by sphingosine, zinc ions and modestly by propanolol. Magnesium-independent phospholipid phosphatase of the plasma membrane that catalyzes the dephosphorylation of a variety of glycerolipid and sphingolipid phosphate esters including phosphatidate/PA, lysophosphatidate/LPA, diacylglycerol pyrophosphate/DGPP, sphingosine 1-phosphate/S1P and ceramide 1-phosphate/C1P. Also acts on N-oleoyl ethanolamine phosphate/N-(9Z-octadecenoyl)-ethanolamine phosphate, a potential physiological compound. Has both an extracellular and an intracellular phosphatase activity, allowing the hydrolysis and the cellular uptake of these bioactive lipid mediators from the milieu, regulating signal transduction in different cellular processes. Through the dephosphorylation of extracellular sphingosine-1-phosphate and the regulation of its extra- and intracellular availability, plays a role in vascular homeostasis, regulating endothelial cell migration, adhesion, survival, proliferation and the production of pro-inflammatory cytokines. By maintaining the appropriate levels of this lipid in the cerebellum, also ensure its proper development and function. Through its intracellular lipid phosphatase activity may act in early compartments of the secretory pathway, regulating the formation of Golgi to endoplasmic reticulum retrograde transport carriers. Its function is as follows. Independently of this phosphatase activity may also function in the Wnt signaling pathway and the stabilization of beta-catenin/CTNNB1, thereby regulating cell proliferation, migration and differentiation in angiogenesis or yet in tumor growth. Also plays a role in integrin-mediated cell-cell adhesion in angiogenesis. In Rattus norvegicus (Rat), this protein is Phospholipid phosphatase 3.